The primary structure comprises 338 residues: Ketol-acid reductoisomerase (NADP(+)) (338 aa).

Residues 1–181 (MRVFYDKDCD…GGGRTGIIET (181 aa)) enclose the KARI N-terminal Rossmann domain. NADP(+)-binding positions include 24–27 (YGSQ), Arg-47, Ser-50, Thr-52, and 82–85 (DEFQ). The active site involves His-107. Gly-133 is a binding site for NADP(+). Residues 182–327 (TFKDETETDL…EKLRAMMPWI (146 aa)) enclose the KARI C-terminal knotted domain. 4 residues coordinate Mg(2+): Asp-190, Glu-194, Glu-226, and Glu-230. Position 251 (Ser-251) interacts with substrate.

Belongs to the ketol-acid reductoisomerase family. Mg(2+) serves as cofactor.

It catalyses the reaction (2R)-2,3-dihydroxy-3-methylbutanoate + NADP(+) = (2S)-2-acetolactate + NADPH + H(+). It carries out the reaction (2R,3R)-2,3-dihydroxy-3-methylpentanoate + NADP(+) = (S)-2-ethyl-2-hydroxy-3-oxobutanoate + NADPH + H(+). Its pathway is amino-acid biosynthesis; L-isoleucine biosynthesis; L-isoleucine from 2-oxobutanoate: step 2/4. It participates in amino-acid biosynthesis; L-valine biosynthesis; L-valine from pyruvate: step 2/4. Its function is as follows. Involved in the biosynthesis of branched-chain amino acids (BCAA). Catalyzes an alkyl-migration followed by a ketol-acid reduction of (S)-2-acetolactate (S2AL) to yield (R)-2,3-dihydroxy-isovalerate. In the isomerase reaction, S2AL is rearranged via a Mg-dependent methyl migration to produce 3-hydroxy-3-methyl-2-ketobutyrate (HMKB). In the reductase reaction, this 2-ketoacid undergoes a metal-dependent reduction by NADPH to yield (R)-2,3-dihydroxy-isovalerate. In Pseudomonas aeruginosa (strain LESB58), this protein is Ketol-acid reductoisomerase (NADP(+)).